A 190-amino-acid polypeptide reads, in one-letter code: Female-specific histamine-binding protein 2 (190 aa).

Residues 1-19 (MKLLILSLALVLALSQVKG) form the signal peptide. The histamine site is built by Ser39, Asp43, Tyr55, Asp58, Trp61, Glu101, Phe117, Tyr119, Phe127, Asp139, Glu154, and Trp156. 2 disulfide bridges follow: Cys67–Cys188 and Cys138–Cys167.

It belongs to the calycin superfamily. Histamine-binding salivary protein family. Monomer. In terms of tissue distribution, expressed in salivary glands.

Its subcellular location is the secreted. In terms of biological role, salivary tick protein that acts by scavenging histamine at the wound site, outcompeting histamine receptors for histamine, thereby overcoming host inflammatory responses. Binds histamine with a high-affinity (Kd=1.7 nM). Contains two binding histamine sites (H and L), that appear to bind histamine with differing affinities (high and low). The protein is Female-specific histamine-binding protein 2 of Rhipicephalus appendiculatus (Brown ear tick).